The sequence spans 233 residues: Probable 2-phosphosulfolactate phosphatase (233 aa).

This sequence belongs to the ComB family. Mg(2+) is required as a cofactor.

It carries out the reaction (2R)-O-phospho-3-sulfolactate + H2O = (2R)-3-sulfolactate + phosphate. The chain is Probable 2-phosphosulfolactate phosphatase from Clostridium tetani (strain Massachusetts / E88).